The primary structure comprises 328 residues: Ketol-acid reductoisomerase (NADP(+)) (328 aa).

The region spanning 1 to 181 (MKIYYENDID…GLARAGVLET (181 aa)) is the KARI N-terminal Rossmann domain. NADP(+) contacts are provided by residues 24-27 (YGSQ), R47, S52, and 82-85 (DEIQ). H107 is a catalytic residue. G133 serves as a coordination point for NADP(+). The KARI C-terminal knotted domain maps to 182–327 (TFREETETDL…SKLRKLCGLE (146 aa)). D190, E194, E226, and E230 together coordinate Mg(2+). S251 lines the substrate pocket.

Belongs to the ketol-acid reductoisomerase family. The cofactor is Mg(2+).

It catalyses the reaction (2R)-2,3-dihydroxy-3-methylbutanoate + NADP(+) = (2S)-2-acetolactate + NADPH + H(+). The enzyme catalyses (2R,3R)-2,3-dihydroxy-3-methylpentanoate + NADP(+) = (S)-2-ethyl-2-hydroxy-3-oxobutanoate + NADPH + H(+). The protein operates within amino-acid biosynthesis; L-isoleucine biosynthesis; L-isoleucine from 2-oxobutanoate: step 2/4. Its pathway is amino-acid biosynthesis; L-valine biosynthesis; L-valine from pyruvate: step 2/4. In terms of biological role, involved in the biosynthesis of branched-chain amino acids (BCAA). Catalyzes an alkyl-migration followed by a ketol-acid reduction of (S)-2-acetolactate (S2AL) to yield (R)-2,3-dihydroxy-isovalerate. In the isomerase reaction, S2AL is rearranged via a Mg-dependent methyl migration to produce 3-hydroxy-3-methyl-2-ketobutyrate (HMKB). In the reductase reaction, this 2-ketoacid undergoes a metal-dependent reduction by NADPH to yield (R)-2,3-dihydroxy-isovalerate. This is Ketol-acid reductoisomerase (NADP(+)) from Methanothermobacter thermautotrophicus (strain ATCC 29096 / DSM 1053 / JCM 10044 / NBRC 100330 / Delta H) (Methanobacterium thermoautotrophicum).